The chain runs to 236 residues: Ribonuclease 3 (236 aa).

The RNase III domain maps to 13-138 (TEKVFKISGY…LIGAIYVDGG (126 aa)). Residue E51 participates in Mg(2+) binding. The active site involves D55. The Mg(2+) site is built by N124 and E127. The active site involves E127. The DRBM domain occupies 164 to 232 (DAKTALQEWA…AKLMLEKVTK (69 aa)).

This sequence belongs to the ribonuclease III family. As to quaternary structure, homodimer. Mg(2+) serves as cofactor.

The protein resides in the cytoplasm. It carries out the reaction Endonucleolytic cleavage to 5'-phosphomonoester.. Digests double-stranded RNA. Involved in the processing of primary rRNA transcript to yield the immediate precursors to the large and small rRNAs (23S and 16S). Processes some mRNAs, and tRNAs when they are encoded in the rRNA operon. Processes pre-crRNA and tracrRNA of type II CRISPR loci if present in the organism. This is Ribonuclease 3 from Anaplasma phagocytophilum (strain HZ).